A 30-amino-acid chain; its full sequence is Photosystem I reaction center subunit XII (30 aa).

Residues 5–25 form a helical membrane-spanning segment; it reads SQIFFALCIALTAAVLAIGLG.

Belongs to the PsaM family.

The protein resides in the plastid. It localises to the chloroplast thylakoid membrane. This chain is Photosystem I reaction center subunit XII, found in Emiliania huxleyi (Coccolithophore).